A 281-amino-acid polypeptide reads, in one-letter code: ATP phosphoribosyltransferase (281 aa).

It belongs to the ATP phosphoribosyltransferase family. Long subfamily. The cofactor is Mg(2+).

The protein localises to the cytoplasm. The catalysed reaction is 1-(5-phospho-beta-D-ribosyl)-ATP + diphosphate = 5-phospho-alpha-D-ribose 1-diphosphate + ATP. The protein operates within amino-acid biosynthesis; L-histidine biosynthesis; L-histidine from 5-phospho-alpha-D-ribose 1-diphosphate: step 1/9. Its activity is regulated as follows. Feedback inhibited by histidine. Catalyzes the condensation of ATP and 5-phosphoribose 1-diphosphate to form N'-(5'-phosphoribosyl)-ATP (PR-ATP). Has a crucial role in the pathway because the rate of histidine biosynthesis seems to be controlled primarily by regulation of HisG enzymatic activity. The chain is ATP phosphoribosyltransferase from Corynebacterium glutamicum (strain R).